The chain runs to 550 residues: tRNA modification GTPase MnmE (550 aa).

Positions 20, 78, and 116 each coordinate (6S)-5-formyl-5,6,7,8-tetrahydrofolate. The TrmE-type G domain occupies 212 to 478 (GFSVVIVGKP…LLDKIFDIIS (267 aa)). A K(+)-binding site is contributed by Asn-222. GTP-binding positions include 222–227 (NVGKST), 241–247 (TDIPGTT), and 266–269 (DTAG). Ser-226 contacts Mg(2+). Thr-241, Ile-243, and Thr-246 together coordinate K(+). Thr-247 serves as a coordination point for Mg(2+). Lys-550 serves as a coordination point for (6S)-5-formyl-5,6,7,8-tetrahydrofolate.

It belongs to the TRAFAC class TrmE-Era-EngA-EngB-Septin-like GTPase superfamily. TrmE GTPase family. Homodimer. Heterotetramer of two MnmE and two MnmG subunits. Requires K(+) as cofactor.

It is found in the cytoplasm. In terms of biological role, exhibits a very high intrinsic GTPase hydrolysis rate. Involved in the addition of a carboxymethylaminomethyl (cmnm) group at the wobble position (U34) of certain tRNAs, forming tRNA-cmnm(5)s(2)U34. This Neorickettsia sennetsu (strain ATCC VR-367 / Miyayama) (Ehrlichia sennetsu) protein is tRNA modification GTPase MnmE.